The following is a 466-amino-acid chain: Probable ribonuclease FAU-1 (466 aa).

The S1 motif domain occupies 90–152; it reads GAIYAGTVTD…TDGRPVLDTT (63 aa).

It belongs to the FAU-1 family.

Probable RNase involved in rRNA stability through maturation and/or degradation of precursor rRNAs. Binds to RNA in loop regions with AU-rich sequences. The protein is Probable ribonuclease FAU-1 of Haloarcula marismortui (strain ATCC 43049 / DSM 3752 / JCM 8966 / VKM B-1809) (Halobacterium marismortui).